The chain runs to 134 residues: Probable RNA-binding protein MJ0652 (134 aa).

In terms of domain architecture, CRM spans Arg11–Lys108.

This Methanocaldococcus jannaschii (strain ATCC 43067 / DSM 2661 / JAL-1 / JCM 10045 / NBRC 100440) (Methanococcus jannaschii) protein is Probable RNA-binding protein MJ0652.